The sequence spans 312 residues: Olfactory receptor 1D5 (312 aa).

At 1-25 (MDGDNQSENSQFLLLGISESPEQQQ) the chain is on the extracellular side. An N-linked (GlcNAc...) asparagine glycan is attached at N5. Residues 26–49 (ILFWMFLSMYLVTVLGNVLIILAI) traverse the membrane as a helical segment. The Cytoplasmic portion of the chain corresponds to 50–57 (SSDSRLHT). Residues 58–79 (PMYFFLANLSFTDLFFVTNTIP) form a helical membrane-spanning segment. At 80–100 (KMLVNLQSQNKAISYAGCLTQ) the chain is on the extracellular side. C97 and C189 form a disulfide bridge. Residues 101 to 120 (LYFLVSLVTLDNLILAVMAY) traverse the membrane as a helical segment. The Cytoplasmic portion of the chain corresponds to 121-140 (DRYVAICCPLHYVTAMSPGL). The helical transmembrane segment at 141–158 (CVLLLSLCWGLSVFYGLL) threads the bilayer. Over 159–196 (LTLLLTRVTFCGPREIHYLFCDMYILLRLACSNTHIIH) the chain is Extracellular. The helical transmembrane segment at 197–220 (TVLVATGCFIFLTPLGFMTTSYVR) threads the bilayer. Over 221–237 (IVRTILQIPSASKKYKA) the chain is Cytoplasmic. The chain crosses the membrane as a helical span at residues 238 to 260 (FSTCASHLGVVSLFYGTLAMVYL). At 261–271 (QPLHTYSMKDS) the chain is on the extracellular side. The helical transmembrane segment at 272-291 (VATVMYAVVTPMMNPFIHSL) threads the bilayer. The Cytoplasmic segment spans residues 292-312 (RNKDMHGALGRVLRRLFQRPK).

Belongs to the G-protein coupled receptor 1 family.

It is found in the cell membrane. Odorant receptor. The protein is Olfactory receptor 1D5 (OR1D5) of Pan troglodytes (Chimpanzee).